The chain runs to 329 residues: Cytoplasmic phosphatidylinositol transfer protein 1 (329 aa).

Residues 267-329 (SHGGYSSAPS…GNKPSLAKPE (63 aa)) form a disordered region.

It belongs to the PtdIns transfer protein family. PI transfer class IIB subfamily.

The protein resides in the cytoplasm. It catalyses the reaction a 1,2-diacyl-sn-glycero-3-phospho-(1D-myo-inositol)(in) = a 1,2-diacyl-sn-glycero-3-phospho-(1D-myo-inositol)(out). The catalysed reaction is a 1,2-diacyl-sn-glycero-3-phosphate(in) = a 1,2-diacyl-sn-glycero-3-phosphate(out). Catalyzes the transfer of phosphatidylinositol (PI) and phosphatidic acid (PA) between membranes. Binds PA derived from the phospholipase D signaling pathway and among the cellular PA species, preferably binds to the C16:0/16:1 and C16:1/18:1 PA species. The polypeptide is Cytoplasmic phosphatidylinositol transfer protein 1 (pitpnc1) (Xenopus tropicalis (Western clawed frog)).